An 816-amino-acid chain; its full sequence is Two pore channel protein 1 (816 aa).

The Cytoplasmic segment spans residues M1–E112. A disordered region spans residues E17–A64. Low complexity predominate over residues P50–P63. The chain crosses the membrane as a helical span at residues L113–L133. R134 is a topological domain (extracellular). The chain crosses the membrane as a helical span at residues L135–L155. Topologically, residues C156–T177 are cytoplasmic. Residues S178–V198 traverse the membrane as a helical segment. Topologically, residues R199–V200 are extracellular. The helical transmembrane segment at T201–R220 threads the bilayer. Topologically, residues N221 to D234 are cytoplasmic. The chain crosses the membrane as a helical span at residues I235–S255. Topologically, residues P256–Y262 are extracellular. An intramembrane region (helical; Pore-forming) is located at residues F263–M286. At M287 to P294 the chain is on the extracellular side. Residues W295–L315 form a helical membrane-spanning segment. The Cytoplasmic segment spans residues L316 to Q444. The chain crosses the membrane as a helical span at residues Y445–L465. Topologically, residues K466–Y479 are extracellular. Residues L480–V500 form a helical membrane-spanning segment. The Cytoplasmic portion of the chain corresponds to E501–L503. Residues S504–A526 form a helical membrane-spanning segment. Topologically, residues L527–F534 are extracellular. The helical transmembrane segment at I535–L549 threads the bilayer. Over K550–T573 the chain is Cytoplasmic. The helical transmembrane segment at L574–F594 threads the bilayer. The Extracellular portion of the chain corresponds to P595–N629. 3 N-linked (GlcNAc...) asparagine glycosylation sites follow: N599, N611, and N616. The segment at residues F630–M653 is an intramembrane region (helical; Pore-forming). The Extracellular segment spans residues E654–T670. The chain crosses the membrane as a helical span at residues F671–V691. The Cytoplasmic portion of the chain corresponds to F692–T816. Positions S769–S796 form a coiled coil. Residues E782 to T816 form a disordered region. Residues Q791–T816 show a composition bias toward low complexity.

Belongs to the calcium channel alpha-1 subunit (TC 1.A.1.11) family. Two pore calcium channel subfamily. Dimer. Interacts with MTOR; the interaction is required for TPCN1 ATP sensitivity. Interacts with STX7, STX8 and STX12. Interacts with JPT2. Found in a complex with LSM12, TPCN1 and TPCN2. In terms of processing, N-glycosylated. Highest expression found in the heart and kidney, and lowest expression found in the spleen.

The protein resides in the lysosome membrane. Its subcellular location is the endosome membrane. The protein localises to the early endosome membrane. It localises to the recycling endosome membrane. It carries out the reaction Na(+)(in) = Na(+)(out). It catalyses the reaction Ca(2+)(in) = Ca(2+)(out). Its activity is regulated as follows. Na(+) current is inhibited by ATP in a MTORC-dependent manner. ATP sensitivity is independent of PI(3,5)P2. Probably regulated by Mg(2+) ions, cytosolic Mg(2+) selectively inhibits outward current while lysosomal Mg(2+) modestly inhibits both the outward and inward currents. In the absence of Mg(2+), NAADP readily activates TPCN2, with properties similar to PI(3,5)P2. Both current elicited by PI(3,5)P2 as well as NAADP are inhibited by tetrandrine. Functionally, intracellular channel initially characterized as a non-selective Ca(2+)-permeable channel activated by NAADP (nicotinic acid adenine dinucleotide phosphate), it is also a voltage-gated highly-selective Na(+) channel activated directly by PI(3,5)P2 (phosphatidylinositol 3,5-bisphosphate) that senses pH changes and confers electrical excitability to organelles. Localizes to the early and recycling endosomes membranes where it plays a role in the uptake and processing of proteins and regulates organellar membrane excitability, membrane trafficking and pH homeostasis. Ion selectivity is not fixed but rather agonist-dependent and under defined ionic conditions, can be readily activated by both NAADP and PI(3,5)P2. Required for mTOR-dependent nutrient sensing. Its function is as follows. (Microbial infection) During Ebola virus (EBOV) infection, controls the movement of endosomes containing virus particles and is required by EBOV to escape from the endosomal network into the cell cytoplasm. The protein is Two pore channel protein 1 of Homo sapiens (Human).